Consider the following 812-residue polypeptide: Leucine--tRNA ligase (812 aa).

The 'HIGH' region motif lies at 40-51 (SYPSGSNLHAGH). A 'KMSKS' region motif is present at residues 572 to 576 (KMSKS). Lys575 contacts ATP.

Belongs to the class-I aminoacyl-tRNA synthetase family.

It is found in the cytoplasm. It carries out the reaction tRNA(Leu) + L-leucine + ATP = L-leucyl-tRNA(Leu) + AMP + diphosphate. This Clostridium tetani (strain Massachusetts / E88) protein is Leucine--tRNA ligase.